Reading from the N-terminus, the 97-residue chain is Putative regulatory protein Dole_1911 (97 aa).

It belongs to the RemA family.

This is Putative regulatory protein Dole_1911 from Desulfosudis oleivorans (strain DSM 6200 / JCM 39069 / Hxd3) (Desulfococcus oleovorans).